We begin with the raw amino-acid sequence, 451 residues long: Chromosomal replication initiator protein DnaA 2 (451 aa).

The domain I, interacts with DnaA modulators stretch occupies residues 1–68 (MQAWEEFLKA…QQKFINGNNK (68 aa)). Residues 68–104 (KRIKIHLSVANTPQRAKKTKTANKEKDFKAPFELTFD) form a domain II region. A domain III, AAA+ region region spans residues 105–326 (ELDPLCLFPY…KGLEALVLRL (222 aa)). Residues Gly156, Gly158, Lys159, and Thr160 each coordinate ATP. Residues 327–451 (HLDAKHSITA…CHIILKKLQG (125 aa)) are domain IV, binds dsDNA.

It belongs to the DnaA family. Oligomerizes as a right-handed, spiral filament on DNA at oriC.

Its subcellular location is the cytoplasm. Its function is as follows. Plays an essential role in the initiation and regulation of chromosomal replication. ATP-DnaA binds to the origin of replication (oriC) to initiate formation of the DNA replication initiation complex once per cell cycle. Binds the DnaA box (a 9 base pair repeat at the origin) and separates the double-stranded (ds)DNA. Forms a right-handed helical filament on oriC DNA; dsDNA binds to the exterior of the filament while single-stranded (ss)DNA is stabiized in the filament's interior. The ATP-DnaA-oriC complex binds and stabilizes one strand of the AT-rich DNA unwinding element (DUE), permitting loading of DNA polymerase. After initiation quickly degrades to an ADP-DnaA complex that is not apt for DNA replication. Binds acidic phospholipids. The protein is Chromosomal replication initiator protein DnaA 2 of Protochlamydia amoebophila (strain UWE25).